Consider the following 513-residue polypeptide: Activin receptor type-2A (513 aa).

The N-terminal stretch at 1-19 is a signal peptide; it reads MGAAAKLAFAVFLISCSSG. Over 20-135 the chain is Extracellular; it reads AILGRSETQE…TSNPVTPKPP (116 aa). Cystine bridges form between Cys30-Cys60, Cys50-Cys78, Cys85-Cys104, Cys91-Cys103, and Cys105-Cys110. N-linked (GlcNAc...) asparagine glycosylation is found at Asn43 and Asn66. A helical membrane pass occupies residues 136 to 161; that stretch reads YYNILLYSLVPLMLIAGIVICAFWVY. Topologically, residues 162–513 are cytoplasmic; sequence RHHKMAYPPV…VDFPPKESSL (352 aa). In terms of domain architecture, Protein kinase spans 192 to 485; sequence LQLLEVKARG…GERITQMQRL (294 aa). Residues 198-206 and Lys219 contribute to the ATP site; that span reads KARGRFGCV. The active-site Proton acceptor is Asp322.

It belongs to the protein kinase superfamily. TKL Ser/Thr protein kinase family. TGFB receptor subfamily. Part of a complex consisting of MAGI2/ARIP1, ACVR2A, ACVR1B and SMAD3. Interacts with MAGI2/ARIP1. Interacts with type I receptor ACVR1. Interacts with BMP7. Interacts with TSC22D1/TSC-22. Interacts with activin A/INHBA. The cofactor is Mg(2+). Mn(2+) is required as a cofactor. Brain, testis, intestine, liver and kidney.

It is found in the cell membrane. The catalysed reaction is L-threonyl-[receptor-protein] + ATP = O-phospho-L-threonyl-[receptor-protein] + ADP + H(+). It carries out the reaction L-seryl-[receptor-protein] + ATP = O-phospho-L-seryl-[receptor-protein] + ADP + H(+). Functionally, on ligand binding, forms a receptor complex consisting of two type II and two type I transmembrane serine/threonine kinases. Type II receptors phosphorylate and activate type I receptors which autophosphorylate, then bind and activate SMAD transcriptional regulators. Receptor for activin A, activin B and inhibin A. Mediates induction of adipogenesis by GDF6. The protein is Activin receptor type-2A of Mus musculus (Mouse).